We begin with the raw amino-acid sequence, 253 residues long: CD151 antigen (253 aa).

Residues 1 to 18 (MGEFNEKKTTCGTVCLKY) lie on the Cytoplasmic side of the membrane. 2 S-palmitoyl cysteine lipidation sites follow: C11 and C15. The chain crosses the membrane as a helical span at residues 19–39 (LLFTYNCCFWLAGLAVMAVGI). At 40–57 (WTLALKSDYISLLASGTY) the chain is on the extracellular side. Residues 58–78 (LATAYILVVAGTVVMVTGVLG) traverse the membrane as a helical segment. The Cytoplasmic segment spans residues 79–91 (CCATFKERRNLLR). Residues 92–112 (LYFILLLIIFLLEIIAGILAY) form a helical membrane-spanning segment. Residues 113 to 221 (AYYQQLNTEL…LETFIQEHLR (109 aa)) are Extracellular-facing. N159 carries N-linked (GlcNAc...) asparagine glycosylation. Residues 222–242 (VIGAVGIGIACVQVFGMIFTC) traverse the membrane as a helical segment. 2 S-palmitoyl cysteine lipidation sites follow: C242 and C243. The Cytoplasmic segment spans residues 243–253 (CLYRSLKLEHY).

The protein belongs to the tetraspanin (TM4SF) family. Interacts with integrins ITGA3:ITGB1, ITGA5:ITGB1, ITGA3:ITGB1 and ITGA6:ITGB4 and with CD9 and CD181. Interacts (via the second extracellular domain) with integrin ITGAV:ITGB3. Interacts with ITGA3; this interaction modulates ITGA3 glycosylation pattern. Interacts with F11R. Interacts with RAC1 and CDC42; these interactions mediate physical association of RAC1 and CDC42 with integrin adhesion receptor complexes. In terms of processing, palmitoylated. Palmitoylation by ZDHHC2 regulates CD151 expression, association with other tetraspanin family proteins and function in cell adhesion. Ubiquitinated by RNF128 on lysine residues present in the tetraspanin amino terminus via 'Lys-48'-linked ubiquitin leading to proteasomal degradation. Expressed in a variety of tissues including vascular endothelium and epidermis. Expressed on erythroid cells, with a higher level of expression in erythroid precursors than on mature erythrocytes. Acts as a sensitive T-cell activation marker.

It is found in the cell membrane. In terms of biological role, structural component of specialized membrane microdomains known as tetraspanin-enriched microdomains (TERMs), which act as platforms for receptor clustering and signaling. Plays a role in various cellular and molecular mechanism through its association with both integrin and non-integrin proteins. These interactions facilitate critical cellular functions, including cell-to-cell communication, wound healing, platelet aggregation, trafficking, cell motility, and angiogenesis. Via interaction with JAM-A/F11R and integrin ITGA3:ITGB1, promotes the recruitment of signaling molecules such as RAC1, CDC42 and RhoGTPases to facilitate the polarization of epithelial cells and the reorganization of the actin cytoskeleton, which are critical steps in cell migration process. Regulates the glycosylation pattern of ITGA3:ITGB1 thereby modulating its activity. Plays an essential role in the maintenance of central laminin-binding integrin ITGA6:ITGB4-containing adhesion complexes. Essential for the proper assembly of the glomerular and tubular basement membranes in kidney. Contributes to T-cell activation by modulating integrin signaling leading to activation of downstream targets PTK2 and MAPK1/MAPK3. Functionally, (Microbial infection) Plays a role in human papillomavirus 16/HPV-16 endocytosis upon binding to cell surface receptor. (Microbial infection) Plays a role in human cytomegalovirus entry into host cell by contributing to entry receptor binding, membrane fusion, or release of the capsid. The protein is CD151 antigen (CD151) of Homo sapiens (Human).